The primary structure comprises 436 residues: GTPase Der (436 aa).

2 EngA-type G domains span residues 4 to 167 (PTIA…PNEE) and 175 to 351 (IKFS…QSQN). Residues 10 to 17 (GRPNVGKS), 57 to 61 (DTGGI), 119 to 122 (NKVD), 181 to 188 (GRPNVGKS), 229 to 233 (DTAGM), and 294 to 297 (NKWD) contribute to the GTP site. The 85-residue stretch at 352–436 (TRIPSAVLND…PIHLIARKRK (85 aa)) folds into the KH-like domain.

Belongs to the TRAFAC class TrmE-Era-EngA-EngB-Septin-like GTPase superfamily. EngA (Der) GTPase family. In terms of assembly, associates with the 50S ribosomal subunit.

In terms of biological role, GTPase that plays an essential role in the late steps of ribosome biogenesis. The sequence is that of GTPase Der from Streptococcus gordonii (strain Challis / ATCC 35105 / BCRC 15272 / CH1 / DL1 / V288).